Consider the following 443-residue polypeptide: Endonuclease CUE2 (443 aa).

2 CUE domains span residues 8-51 (DHES…KEND) and 55-98 (TVDN…NYET). One can recognise a Smr domain in the interval 347–443 (LDFHGFLPSE…YFRIEGKKKK (97 aa)).

Its function is as follows. mRNA endonuclease involved in the No-Go Decay (NGD) pathway, which catalyzes mRNA cleavage and degradation in response to ribosome collisions. Acts downstream of the ribosome collision sensor HEL2. Specifically recognizes and binds RPS7/eS7 polyubiquitinated by MOT2/NOT4 and HEL2, promoting CUE2 recruitment to stalled ribosomes, where it mediates mRNA cleavage upstream of the colliding ribosome. Also mediates mRNA cleavage within colliding ribosomes: recruited to colliding ribosomes downstream of the RQT (ribosome quality control trigger) complex following disassembly of stalled ribosomes and cleaves mRNAs partially released from the colliding ribosome. This chain is Endonuclease CUE2, found in Saccharomyces cerevisiae (strain ATCC 204508 / S288c) (Baker's yeast).